A 464-amino-acid chain; its full sequence is Glutamate--tRNA ligase 1 (464 aa).

Residues 8-18 (PSPTGHLHVGG) carry the 'HIGH' region motif. The 'KMSKS' region motif lies at 231 to 235 (PLSKR). Lys-234 contributes to the ATP binding site.

This sequence belongs to the class-I aminoacyl-tRNA synthetase family. Glutamate--tRNA ligase type 1 subfamily. In terms of assembly, monomer.

Its subcellular location is the cytoplasm. It carries out the reaction tRNA(Glu) + L-glutamate + ATP = L-glutamyl-tRNA(Glu) + AMP + diphosphate. Catalyzes the attachment of glutamate to tRNA(Glu) in a two-step reaction: glutamate is first activated by ATP to form Glu-AMP and then transferred to the acceptor end of tRNA(Glu). This is Glutamate--tRNA ligase 1 from Thermotoga petrophila (strain ATCC BAA-488 / DSM 13995 / JCM 10881 / RKU-1).